The chain runs to 389 residues: Transcription factor TGAL10 (389 aa).

The segment at 80–110 (DDQDNAAALQESPRHASDSFEQEASKPRDKI) is disordered. The segment covering 91–110 (SPRHASDSFEQEASKPRDKI) has biased composition (basic and acidic residues). Residues 107 to 151 (RDKIQRRLAQNREAARKSRLRKKAYIQNLETSRMKLAHLEQEITR) form the bZIP domain. The interval 109–129 (KIQRRLAQNREAARKSRLRKK) is basic motif. The tract at residues 135 to 149 (LETSRMKLAHLEQEI) is leucine-zipper. The region spanning 176-389 (VVTFEVEYAQ…LHVRRRAELG (214 aa)) is the DOG1 domain. 2 disordered regions span residues 320 to 345 (TSCD…GDGG) and 370 to 389 (HRRS…AELG). Residues 380-389 (LHVRRRAELG) show a composition bias toward basic residues.

This sequence belongs to the bZIP family.

It localises to the nucleus. In terms of biological role, transcriptional regulator involved in defense response. The polypeptide is Transcription factor TGAL10 (Oryza sativa subsp. japonica (Rice)).